Consider the following 102-residue polypeptide: Co-chaperonin GroES (102 aa).

It belongs to the GroES chaperonin family. Heptamer of 7 subunits arranged in a ring. Interacts with the chaperonin GroEL.

Its subcellular location is the cytoplasm. Functionally, together with the chaperonin GroEL, plays an essential role in assisting protein folding. The GroEL-GroES system forms a nano-cage that allows encapsulation of the non-native substrate proteins and provides a physical environment optimized to promote and accelerate protein folding. GroES binds to the apical surface of the GroEL ring, thereby capping the opening of the GroEL channel. The polypeptide is Co-chaperonin GroES (Streptomyces griseus subsp. griseus (strain JCM 4626 / CBS 651.72 / NBRC 13350 / KCC S-0626 / ISP 5235)).